The following is a 72-amino-acid chain: Translation initiation factor IF-1 (72 aa).

In terms of domain architecture, S1-like spans 1–72; it reads MAKDDVIEVD…DKGRITFRYK (72 aa).

This sequence belongs to the IF-1 family. In terms of assembly, component of the 30S ribosomal translation pre-initiation complex which assembles on the 30S ribosome in the order IF-2 and IF-3, IF-1 and N-formylmethionyl-tRNA(fMet); mRNA recruitment can occur at any time during PIC assembly.

Its subcellular location is the cytoplasm. In terms of biological role, one of the essential components for the initiation of protein synthesis. Stabilizes the binding of IF-2 and IF-3 on the 30S subunit to which N-formylmethionyl-tRNA(fMet) subsequently binds. Helps modulate mRNA selection, yielding the 30S pre-initiation complex (PIC). Upon addition of the 50S ribosomal subunit IF-1, IF-2 and IF-3 are released leaving the mature 70S translation initiation complex. This chain is Translation initiation factor IF-1, found in Wolinella succinogenes (strain ATCC 29543 / DSM 1740 / CCUG 13145 / JCM 31913 / LMG 7466 / NCTC 11488 / FDC 602W) (Vibrio succinogenes).